We begin with the raw amino-acid sequence, 372 residues long: Methenyltetrahydrofolate synthase domain-containing protein (372 aa).

Residues 246–258 (KQAGKDVTLRDEP) show a composition bias toward basic and acidic residues. Residues 246–289 (KQAGKDVTLRDEPGSQQPAPGPIRRPQDRPQTGSRGGSRSPLQG) form a disordered region. An RRM domain is found at 296–369 (ATVCVGNLPF…NALRVSLGQQ (74 aa)).

This chain is Methenyltetrahydrofolate synthase domain-containing protein (Mthfsd), found in Mus musculus (Mouse).